A 473-amino-acid chain; its full sequence is Photosystem II CP43 reaction center protein (473 aa).

Positions 1–14 are excised as a propeptide; the sequence is MKTLYSLRRFYPVE. Residue Thr15 is modified to N-acetylthreonine. The residue at position 15 (Thr15) is a Phosphothreonine. The next 5 helical transmembrane spans lie at 69–93, 134–155, 178–200, 255–275, and 291–312; these read LFEV…PHLA, LLGP…KDRN, KALY…RKIT, KPFA…LSYS, and WFNN…ASQA. Glu367 contributes to the [CaMn4O5] cluster binding site. The helical transmembrane segment at 447–471 threads the bilayer; the sequence is RARAAAAGFEKGIDRDFEPVLSMTP.

The protein belongs to the PsbB/PsbC family. PsbC subfamily. As to quaternary structure, PSII is composed of 1 copy each of membrane proteins PsbA, PsbB, PsbC, PsbD, PsbE, PsbF, PsbH, PsbI, PsbJ, PsbK, PsbL, PsbM, PsbT, PsbX, PsbY, PsbZ, Psb30/Ycf12, at least 3 peripheral proteins of the oxygen-evolving complex and a large number of cofactors. It forms dimeric complexes. Binds multiple chlorophylls and provides some of the ligands for the Ca-4Mn-5O cluster of the oxygen-evolving complex. It may also provide a ligand for a Cl- that is required for oxygen evolution. PSII binds additional chlorophylls, carotenoids and specific lipids. serves as cofactor.

The protein localises to the plastid. The protein resides in the chloroplast thylakoid membrane. One of the components of the core complex of photosystem II (PSII). It binds chlorophyll and helps catalyze the primary light-induced photochemical processes of PSII. PSII is a light-driven water:plastoquinone oxidoreductase, using light energy to abstract electrons from H(2)O, generating O(2) and a proton gradient subsequently used for ATP formation. The chain is Photosystem II CP43 reaction center protein from Daucus carota (Wild carrot).